A 479-amino-acid chain; its full sequence is UDP-N-acetylmuramate--L-alanine ligase (479 aa).

An ATP-binding site is contributed by 114-120; sequence GTHGKTT.

Belongs to the MurCDEF family.

It localises to the cytoplasm. It carries out the reaction UDP-N-acetyl-alpha-D-muramate + L-alanine + ATP = UDP-N-acetyl-alpha-D-muramoyl-L-alanine + ADP + phosphate + H(+). It functions in the pathway cell wall biogenesis; peptidoglycan biosynthesis. Cell wall formation. This chain is UDP-N-acetylmuramate--L-alanine ligase, found in Pelodictyon phaeoclathratiforme (strain DSM 5477 / BU-1).